The primary structure comprises 100 residues: Small ribosomal subunit protein uS14c (100 aa).

Belongs to the universal ribosomal protein uS14 family. Part of the 30S ribosomal subunit.

The protein localises to the plastid. The protein resides in the chloroplast. In terms of biological role, binds 16S rRNA, required for the assembly of 30S particles. The sequence is that of Small ribosomal subunit protein uS14c from Pleurastrum terricola (Filamentous green alga).